Reading from the N-terminus, the 361-residue chain is Alternative oxidase, mitochondrial (361 aa).

Residues 156–178 form a helical membrane-spanning segment; that stretch reads YLVRNVFLESVAGVPGMVAGMLR. Residues Glu-164, Glu-203, and His-206 each coordinate Fe cation. The helical transmembrane segment at 218–240 threads the bilayer; that stretch reads WFMRLAVLGAQGVFFNAMFLSYL. Residues Glu-254, Glu-309, and His-312 each coordinate Fe cation. The segment covering 318 to 328 has biased composition (polar residues); it reads TLGNLDQNSDP. The interval 318-361 is disordered; it reads TLGNLDQNSDPNPYASKYDNPNVPHPRKDIKYLKPSGWEREEVM. A compositionally biased stretch (basic and acidic residues) spans 343–361; it reads PRKDIKYLKPSGWEREEVM.

The protein belongs to the alternative oxidase family. Requires Fe cation as cofactor.

It is found in the mitochondrion inner membrane. In terms of biological role, catalyzes cyanide-resistant oxygen consumption. May increase respiration when the cytochrome respiratory pathway is restricted, or in response to low temperatures. In Venturia inaequalis (Apple scab fungus), this protein is Alternative oxidase, mitochondrial (AOX1).